The primary structure comprises 190 residues: Probable nicotinate-nucleotide adenylyltransferase (190 aa).

The protein belongs to the NadD family.

It catalyses the reaction nicotinate beta-D-ribonucleotide + ATP + H(+) = deamido-NAD(+) + diphosphate. It participates in cofactor biosynthesis; NAD(+) biosynthesis; deamido-NAD(+) from nicotinate D-ribonucleotide: step 1/1. Functionally, catalyzes the reversible adenylation of nicotinate mononucleotide (NaMN) to nicotinic acid adenine dinucleotide (NaAD). The chain is Probable nicotinate-nucleotide adenylyltransferase from Frankia alni (strain DSM 45986 / CECT 9034 / ACN14a).